Reading from the N-terminus, the 338-residue chain is Glutamyl-tRNA reductase (338 aa).

Substrate contacts are provided by residues 50-53 (TCHR), serine 102, 107-109 (ETE), and glutamine 113. The active-site Nucleophile is cysteine 51. An NADP(+)-binding site is contributed by 181–186 (GYSEIN).

It belongs to the glutamyl-tRNA reductase family. As to quaternary structure, homodimer.

The enzyme catalyses (S)-4-amino-5-oxopentanoate + tRNA(Glu) + NADP(+) = L-glutamyl-tRNA(Glu) + NADPH + H(+). It participates in porphyrin-containing compound metabolism; protoporphyrin-IX biosynthesis; 5-aminolevulinate from L-glutamyl-tRNA(Glu): step 1/2. Its function is as follows. Catalyzes the NADPH-dependent reduction of glutamyl-tRNA(Glu) to glutamate 1-semialdehyde (GSA). The polypeptide is Glutamyl-tRNA reductase (Chlamydia abortus (strain DSM 27085 / S26/3) (Chlamydophila abortus)).